A 499-amino-acid polypeptide reads, in one-letter code: FAD-dependent oxidoreductase domain-containing protein 1 (499 aa).

Residues 75 to 95 traverse the membrane as a helical segment; sequence ERADVVIVGGGVMGWSIAYWL.

FAD serves as cofactor.

The protein localises to the mitochondrion inner membrane. Functionally, required for the assembly of the mitochondrial membrane respiratory chain NADH dehydrogenase (Complex I). Involved in mid-late stages of complex I assembly. The polypeptide is FAD-dependent oxidoreductase domain-containing protein 1 (foxred1) (Xenopus laevis (African clawed frog)).